Reading from the N-terminus, the 114-residue chain is Large ribosomal subunit protein uL22c (114 aa).

This sequence belongs to the universal ribosomal protein uL22 family. As to quaternary structure, part of the 50S ribosomal subunit.

It localises to the plastid. The protein localises to the cyanelle. Functionally, this protein binds specifically to 23S rRNA. Its function is as follows. The globular domain of the protein is located near the polypeptide exit tunnel on the outside of the subunit, while an extended beta-hairpin is found that lines the wall of the exit tunnel in the center of the 70S ribosome. This is Large ribosomal subunit protein uL22c (rpl22) from Cyanophora paradoxa.